We begin with the raw amino-acid sequence, 376 residues long: Queuine tRNA-ribosyltransferase (376 aa).

Asp93 acts as the Proton acceptor in catalysis. Residues Asp93–Phe97, Asp147, Gln190, and Gly217 each bind substrate. The segment at Gly248–Asp254 is RNA binding. Asp267 serves as the catalytic Nucleophile. Residues Cys305, Cys307, Cys310, and His336 each coordinate Zn(2+).

Belongs to the queuine tRNA-ribosyltransferase family. In terms of assembly, homodimer. Within each dimer, one monomer is responsible for RNA recognition and catalysis, while the other monomer binds to the replacement base PreQ1. Zn(2+) serves as cofactor.

The catalysed reaction is 7-aminomethyl-7-carbaguanine + guanosine(34) in tRNA = 7-aminomethyl-7-carbaguanosine(34) in tRNA + guanine. The protein operates within tRNA modification; tRNA-queuosine biosynthesis. Catalyzes the base-exchange of a guanine (G) residue with the queuine precursor 7-aminomethyl-7-deazaguanine (PreQ1) at position 34 (anticodon wobble position) in tRNAs with GU(N) anticodons (tRNA-Asp, -Asn, -His and -Tyr). Catalysis occurs through a double-displacement mechanism. The nucleophile active site attacks the C1' of nucleotide 34 to detach the guanine base from the RNA, forming a covalent enzyme-RNA intermediate. The proton acceptor active site deprotonates the incoming PreQ1, allowing a nucleophilic attack on the C1' of the ribose to form the product. After dissociation, two additional enzymatic reactions on the tRNA convert PreQ1 to queuine (Q), resulting in the hypermodified nucleoside queuosine (7-(((4,5-cis-dihydroxy-2-cyclopenten-1-yl)amino)methyl)-7-deazaguanosine). The sequence is that of Queuine tRNA-ribosyltransferase from Ruegeria sp. (strain TM1040) (Silicibacter sp.).